Reading from the N-terminus, the 380-residue chain is Succinyl-diaminopimelate desuccinylase (380 aa).

Position 69 (histidine 69) interacts with Zn(2+). Aspartate 71 is an active-site residue. Aspartate 102 provides a ligand contact to Zn(2+). Glutamate 136 acts as the Proton acceptor in catalysis. Residues glutamate 137, glutamate 165, and histidine 351 each contribute to the Zn(2+) site.

It belongs to the peptidase M20A family. DapE subfamily. As to quaternary structure, homodimer. The cofactor is Zn(2+). Co(2+) serves as cofactor.

It carries out the reaction N-succinyl-(2S,6S)-2,6-diaminopimelate + H2O = (2S,6S)-2,6-diaminopimelate + succinate. The protein operates within amino-acid biosynthesis; L-lysine biosynthesis via DAP pathway; LL-2,6-diaminopimelate from (S)-tetrahydrodipicolinate (succinylase route): step 3/3. Functionally, catalyzes the hydrolysis of N-succinyl-L,L-diaminopimelic acid (SDAP), forming succinate and LL-2,6-diaminopimelate (DAP), an intermediate involved in the bacterial biosynthesis of lysine and meso-diaminopimelic acid, an essential component of bacterial cell walls. In Bordetella petrii (strain ATCC BAA-461 / DSM 12804 / CCUG 43448), this protein is Succinyl-diaminopimelate desuccinylase.